Consider the following 242-residue polypeptide: Glucosamine-6-phosphate deaminase (242 aa).

Residue Asp67 is the Proton acceptor; for enolization step of the active site. The active-site For ring-opening step is the Asn136. Residue His138 is the Proton acceptor; for ring-opening step of the active site. The active-site For ring-opening step is Glu143.

This sequence belongs to the glucosamine/galactosamine-6-phosphate isomerase family. NagB subfamily.

It catalyses the reaction alpha-D-glucosamine 6-phosphate + H2O = beta-D-fructose 6-phosphate + NH4(+). It participates in amino-sugar metabolism; N-acetylneuraminate degradation; D-fructose 6-phosphate from N-acetylneuraminate: step 5/5. Functionally, catalyzes the reversible isomerization-deamination of glucosamine 6-phosphate (GlcN6P) to form fructose 6-phosphate (Fru6P) and ammonium ion. The sequence is that of Glucosamine-6-phosphate deaminase from Clostridium perfringens (strain SM101 / Type A).